Consider the following 148-residue polypeptide: MKVILLQDVKKIGKKGDIIEASDGYARNFLFPRKLAQEASDANMHILNNKKENERKQKLAELEAAQKLAEELKGKEIKIKAKTGENGKLFGAITSKDVAELIREQYKIEIDKKKIVMDTIKLAGGYEIDIKLYPEVSTKMKVIIVPQE.

It belongs to the bacterial ribosomal protein bL9 family.

Binds to the 23S rRNA. This is Large ribosomal subunit protein bL9 from Clostridium beijerinckii (strain ATCC 51743 / NCIMB 8052) (Clostridium acetobutylicum).